A 906-amino-acid polypeptide reads, in one-letter code: Glutamate receptor 1 (906 aa).

An N-terminal signal peptide occupies residues 1–18; the sequence is MQHIFAFFCTGFLGAVVG. At 19–536 the chain is on the extracellular side; sequence ANFPNNIQIG…GVFSFLDPLA (518 aa). Asn-63, Asn-249, Asn-257, Asn-363, Asn-401, and Asn-406 each carry an N-linked (GlcNAc...) asparagine glycan. Cysteines 75 and 323 form a disulfide. L-glutamate contacts are provided by Pro-492, Thr-494, and Arg-499. The chain crosses the membrane as a helical span at residues 537 to 557; that stretch reads YEIWMCIVFAYIGVSVVLFLV. The Cytoplasmic portion of the chain corresponds to 558 to 584; it reads SRFSPYEWHSEEFEEGRDQTTSDQSNE. An intramembrane region (helical; Pore-forming) is located at residues 585 to 600; the sequence is FGIFNSLWFSLGAFMQ. Residues 601 to 603 lie within the membrane without spanning it; that stretch reads QGC. Cys-603 carries the S-palmitoyl cysteine lipid modification. Topologically, residues 604-609 are cytoplasmic; it reads DISPRS. A helical membrane pass occupies residues 610-630; it reads LSGRIVGGVWWFFTLIIISSY. Residues 631 to 805 are Extracellular-facing; that stretch reads TANLAAFLTV…DKTSALSLSN (175 aa). Residue Ser-645 is modified to Phosphoserine. L-glutamate contacts are provided by Ser-668 and Thr-669. Residue Ser-710 is modified to Phosphoserine. Residue Glu-719 participates in L-glutamate binding. A disulfide bond links Cys-732 and Cys-787. The chain crosses the membrane as a helical span at residues 806-826; sequence VAGVFYILIGGLGLAMLVALI. Residues 827 to 906 are Cytoplasmic-facing; that stretch reads EFCYKSRSES…SGMPLGATGL (80 aa). Cys-829 is lipidated: S-palmitoyl cysteine. A phosphoserine mark is found at Ser-849 and Ser-863. Residues 861–880 form a disordered region; sequence RNSGAGASSGGSGENGRVVS. The short motif at 903-906 is the PDZ-binding element; sequence ATGL.

This sequence belongs to the glutamate-gated ion channel (TC 1.A.10.1) family. GRIA1 subfamily. Homotetramer or heterotetramer of pore-forming glutamate receptor subunits; heteromeric assembly can be the result of both receptor subtype and flip or flop form and according the composition, one partner can be dominant with respect to the fast desensitizing current component, whereas the other can determine the steady-state component. Tetramers may be formed by the dimerization of dimers. Found in a complex with GRIA2, GRIA3, GRIA4, CNIH2, CNIH3, CACNG2, CACNG3, CACNG4, CACNG5, CACNG7 and CACNG8. Interacts with HIP1 and RASGRF2. Interacts with SYNDIG1 and GRIA2. Interacts with DLG1 (via C-terminus). Interacts with LRFN1. Interacts with PRKG2. Interacts with CNIH2 and CACNG2. Interacts with CACNG5; this interaction modulates the gating. Interacts (via C-terminus) with PDLIM4 (via LIM domain); this interaction as well as the interaction of PDLIM4 with alpha-actinin is required for their colocalization in early endosomes. Interacts with SNX27 (via PDZ domain); the interaction is required for recycling to the plasma membrane when endocytosed and prevent degradation in lysosomes. Interacts (via PDZ-binding motif) with SHANK3 (via PDZ domain). Interacts with CACNG3; associates GRIA1 with the adapter protein complex 4 (AP-4) to target GRIA1 to the somatodendritic compartment of neurons. Interacts with CACNG2; this interaction mediates traffick to the plasma membrane and modulation of desensitization. Interacts with CNIH2 and CNIH3; this interaction promotes expression at the plasma membrane and extensively modulates their gating properties by slowing deactivation and desensitization kinetics. Found in a complex with GRIA2, GRIA3, GRIA4, DLG4, CACNG8 and CNIH2. Post-translationally, palmitoylated. Depalmitoylated by CPT1C and upon L-glutamate stimulation. ZDHHC3/GODZ specifically palmitoylates Cys-603, which leads to Golgi retention and decreased cell surface expression. In contrast, Cys-829 palmitoylation does not affect cell surface expression but regulates stimulation-dependent endocytosis. Phosphorylated at Ser-645. Phosphorylated at Ser-710 by PKC. Phosphorylated at Ser-849 by PKC, PKA and CAMK2. Phosphorylated at Ser-863 by PKC, PKA and PRKG2. Phosphorylation of Ser-863 is reduced by induction of long-term depression and increased by induction of long-term potentiation. In terms of tissue distribution, widely expressed in brain.

The protein localises to the cell membrane. Its subcellular location is the endoplasmic reticulum membrane. The protein resides in the postsynaptic cell membrane. It is found in the postsynaptic density membrane. It localises to the cell projection. The protein localises to the dendrite. Its subcellular location is the dendritic spine. The protein resides in the early endosome membrane. It is found in the recycling endosome membrane. It localises to the presynapse. The protein localises to the synapse. It carries out the reaction Ca(2+)(in) = Ca(2+)(out). The enzyme catalyses Na(+)(in) = Na(+)(out). It catalyses the reaction Mg(2+)(in) = Mg(2+)(out). The catalysed reaction is Li(+)(in) = Li(+)(out). It carries out the reaction K(+)(in) = K(+)(out). The enzyme catalyses Sr(2+)(in) = Sr(2+)(out). In terms of biological role, ionotropic glutamate receptor that functions as a ligand-gated cation channel, gated by L-glutamate and glutamatergic agonists such as alpha-amino-3-hydroxy-5-methyl-4-isoxazolepropionic acid (AMPA), quisqualic acid, and kainic acid. L-glutamate acts as an excitatory neurotransmitter at many synapses in the central nervous system. Binding of the excitatory neurotransmitter L-glutamate induces a conformation change, leading to the opening of the cation channel, and thereby converts the chemical signal to an electrical impulse upon entry of monovalent and divalent cations such as sodium and calcium. The receptor then desensitizes rapidly and enters in a transient inactive state, characterized by the presence of bound agonist. In the presence of CACNG2 or CACNG4 or CACNG7 or CACNG8, shows resensitization which is characterized by a delayed accumulation of current flux upon continued application of L-glutamate. Resensitization is blocked by CNIH2 through interaction with CACNG8 in the CACNG8-containing AMPA receptors complex. Calcium (Ca(2+)) permeability depends on subunits composition and, heteromeric channels containing edited GRIA2 subunit are calcium-impermeable. Also permeable to other divalents cations such as strontium(2+) and magnesium(2+) and monovalent cations such as potassium(1+) and lithium(1+). The polypeptide is Glutamate receptor 1 (Homo sapiens (Human)).